The following is a 340-amino-acid chain: DNA-directed RNA polymerase subunit alpha (340 aa).

Residues Met-1–Glu-236 form an alpha N-terminal domain (alpha-NTD) region. The interval Phe-252–Tyr-340 is alpha C-terminal domain (alpha-CTD).

It belongs to the RNA polymerase alpha chain family. As to quaternary structure, homodimer. The RNAP catalytic core consists of 2 alpha, 1 beta, 1 beta' and 1 omega subunit. When a sigma factor is associated with the core the holoenzyme is formed, which can initiate transcription.

The enzyme catalyses RNA(n) + a ribonucleoside 5'-triphosphate = RNA(n+1) + diphosphate. Functionally, DNA-dependent RNA polymerase catalyzes the transcription of DNA into RNA using the four ribonucleoside triphosphates as substrates. In Rhodospirillum rubrum (strain ATCC 11170 / ATH 1.1.1 / DSM 467 / LMG 4362 / NCIMB 8255 / S1), this protein is DNA-directed RNA polymerase subunit alpha.